Consider the following 171-residue polypeptide: ATP synthase subunit b (171 aa).

The helical transmembrane segment at 32-52 (FFAVLLIFLIVLGVIAKWVVP) threads the bilayer.

Belongs to the ATPase B chain family. In terms of assembly, F-type ATPases have 2 components, F(1) - the catalytic core - and F(0) - the membrane proton channel. F(1) has five subunits: alpha(3), beta(3), gamma(1), delta(1), epsilon(1). F(0) has three main subunits: a(1), b(2) and c(10-14). The alpha and beta chains form an alternating ring which encloses part of the gamma chain. F(1) is attached to F(0) by a central stalk formed by the gamma and epsilon chains, while a peripheral stalk is formed by the delta and b chains.

It localises to the cell membrane. F(1)F(0) ATP synthase produces ATP from ADP in the presence of a proton or sodium gradient. F-type ATPases consist of two structural domains, F(1) containing the extramembraneous catalytic core and F(0) containing the membrane proton channel, linked together by a central stalk and a peripheral stalk. During catalysis, ATP synthesis in the catalytic domain of F(1) is coupled via a rotary mechanism of the central stalk subunits to proton translocation. In terms of biological role, component of the F(0) channel, it forms part of the peripheral stalk, linking F(1) to F(0). The polypeptide is ATP synthase subunit b (Mycolicibacterium gilvum (strain PYR-GCK) (Mycobacterium gilvum (strain PYR-GCK))).